The primary structure comprises 148 residues: MLIEKIMGNIAHEEEHHEKKTEWIELEWEELSKRILRTETDQGTDIALRLEGDEPLKYGDLLWEDEHRRIAIRTKLEPVIVITPNDMHEMGKSAFELGNRHTPCLIENNEIIVRADHTINPLLDEIGVHYETTERRFKQPFKYRGHSH.

Belongs to the UreE family.

Its subcellular location is the cytoplasm. Its function is as follows. Involved in urease metallocenter assembly. Binds nickel. Probably functions as a nickel donor during metallocenter assembly. This is Urease accessory protein UreE from Lysinibacillus sphaericus (strain C3-41).